The primary structure comprises 240 residues: tRNA pseudouridine synthase B (240 aa).

Asp-54 functions as the Nucleophile in the catalytic mechanism.

The protein belongs to the pseudouridine synthase TruB family. Type 1 subfamily.

The catalysed reaction is uridine(55) in tRNA = pseudouridine(55) in tRNA. Responsible for synthesis of pseudouridine from uracil-55 in the psi GC loop of transfer RNAs. This is tRNA pseudouridine synthase B from Chlorobaculum tepidum (strain ATCC 49652 / DSM 12025 / NBRC 103806 / TLS) (Chlorobium tepidum).